Reading from the N-terminus, the 285-residue chain is Eukaryotic translation initiation factor 3 subunit F-2 (285 aa).

The MPN domain occupies 11 to 145 (VFLKPLVLFQ…TRLYCAVEMG (135 aa)).

It belongs to the eIF-3 subunit F family. Component of the eukaryotic translation initiation factor 3 (eIF-3) complex. The eIF-3 complex interacts with pix.

The protein resides in the cytoplasm. In terms of biological role, component of the eukaryotic translation initiation factor 3 (eIF-3) complex, which is involved in protein synthesis of a specialized repertoire of mRNAs and, together with other initiation factors, stimulates binding of mRNA and methionyl-tRNAi to the 40S ribosome. The eIF-3 complex specifically targets and initiates translation of a subset of mRNAs involved in cell proliferation. This is Eukaryotic translation initiation factor 3 subunit F-2 from Drosophila sechellia (Fruit fly).